A 237-amino-acid chain; its full sequence is Probable 2-phosphosulfolactate phosphatase (237 aa).

Belongs to the ComB family. Requires Mg(2+) as cofactor.

The enzyme catalyses (2R)-O-phospho-3-sulfolactate + H2O = (2R)-3-sulfolactate + phosphate. The polypeptide is Probable 2-phosphosulfolactate phosphatase (Thermus thermophilus (strain ATCC 27634 / DSM 579 / HB8)).